An 84-amino-acid polypeptide reads, in one-letter code: Small ribosomal subunit protein uS17 (84 aa).

Belongs to the universal ribosomal protein uS17 family. In terms of assembly, part of the 30S ribosomal subunit.

Functionally, one of the primary rRNA binding proteins, it binds specifically to the 5'-end of 16S ribosomal RNA. The protein is Small ribosomal subunit protein uS17 of Clostridium botulinum (strain Alaska E43 / Type E3).